The primary structure comprises 630 residues: Transposase B from transposon Tn554 (630 aa).

Residues 216 to 302 (TYFKQLVKRY…ILEGLFSTLL (87 aa)) form the Core-binding (CB) domain. A Tyr recombinase domain is found at 326–513 (AKPRFIDEFV…FDETLKNEFT (188 aa)). Active-site residues include Arg363, Lys391, His465, Arg468, and His491. The O-(3'-phospho-DNA)-tyrosine intermediate role is filled by Tyr500.

It belongs to the 'phage' integrase family.

One of three proteins encoded by transposon Tn554 required for its transposition. The chain is Transposase B from transposon Tn554 (tnpB1) from Staphylococcus aureus (strain Mu50 / ATCC 700699).